Consider the following 397-residue polypeptide: N(6)-adenosine-methyltransferase non-catalytic subunit METTL14 (397 aa).

Disordered stretches follow at residues 37-67 (NAEDINSSRQLNSGGQREEEDGGASSSKKTP) and 368-397 (ELLRPKSPPPNSKVLRGRGRGFPRGRGRPR). Over residues 40–51 (DINSSRQLNSGG) the composition is skewed to polar residues. Over residues 382 to 397 (LRGRGRGFPRGRGRPR) the composition is skewed to basic residues.

The protein belongs to the MT-A70-like family. In terms of assembly, component of the WMM complex, a N6-methyltransferase complex composed of a catalytic subcomplex, named MAC, and of an associated subcomplex, named MACOM. The MAC subcomplex is composed of Ime4/Mettl3 and Mettl14. The MACOM subcomplex is composed of fl(2)d, Flacc/Xio, Hakai, vir, and, in some cases of nito.

The protein localises to the nucleus. Non-catalytic component of the WMM complex, a complex that mediates N6-methyladenosine (m6A) methylation of mRNAs, a modification that plays a role in the efficiency of mRNA splicing and is required for sex determination. In the heterodimer formed with Ime4/Mettl3, Mettl14 constitutes the RNA-binding scaffold that recognizes the substrate rather than the catalytic core. Required for sex determination and dosage compensation via Sxl alternative splicing: m6A methylation acts as a key regulator of Sxl pre-mRNA and promotes female-specific alternative splicing of Sxl, which determines female physiognomy. M6A methylation is also required for neuronal functions. In Drosophila melanogaster (Fruit fly), this protein is N(6)-adenosine-methyltransferase non-catalytic subunit METTL14.